Reading from the N-terminus, the 472-residue chain is ATP-dependent protease ATPase subunit HslU (472 aa).

Residues I20, 62-67, D285, E350, and R422 contribute to the ATP site; that span reads GVGKTE.

Belongs to the ClpX chaperone family. HslU subfamily. As to quaternary structure, a double ring-shaped homohexamer of HslV is capped on each side by a ring-shaped HslU homohexamer. The assembly of the HslU/HslV complex is dependent on binding of ATP.

Its subcellular location is the cytoplasm. In terms of biological role, ATPase subunit of a proteasome-like degradation complex; this subunit has chaperone activity. The binding of ATP and its subsequent hydrolysis by HslU are essential for unfolding of protein substrates subsequently hydrolyzed by HslV. HslU recognizes the N-terminal part of its protein substrates and unfolds these before they are guided to HslV for hydrolysis. The polypeptide is ATP-dependent protease ATPase subunit HslU (Lactiplantibacillus plantarum (strain ATCC BAA-793 / NCIMB 8826 / WCFS1) (Lactobacillus plantarum)).